The sequence spans 338 residues: tRNA dimethylallyltransferase (338 aa).

An ATP-binding site is contributed by 13–20 (GPTASGKT). A substrate-binding site is contributed by 15 to 20 (TASGKT). Interaction with substrate tRNA stretches follow at residues 38-41 (DSTL) and 162-166 (QRVSR).

The protein belongs to the IPP transferase family. In terms of assembly, monomer. Mg(2+) serves as cofactor.

The catalysed reaction is adenosine(37) in tRNA + dimethylallyl diphosphate = N(6)-dimethylallyladenosine(37) in tRNA + diphosphate. Functionally, catalyzes the transfer of a dimethylallyl group onto the adenine at position 37 in tRNAs that read codons beginning with uridine, leading to the formation of N6-(dimethylallyl)adenosine (i(6)A). This Cellvibrio japonicus (strain Ueda107) (Pseudomonas fluorescens subsp. cellulosa) protein is tRNA dimethylallyltransferase.